The following is a 518-amino-acid chain: Xylose import ATP-binding protein XylG (518 aa).

2 ABC transporter domains span residues 6 to 245 (LQMN…VGRE) and 262 to 507 (FEAR…LSHP). An ATP-binding site is contributed by 38–45 (GENGTGKS).

This sequence belongs to the ABC transporter superfamily. Xylose importer (TC 3.A.1.2.4) family. As to quaternary structure, the complex is composed of two ATP-binding proteins (XylG), two transmembrane proteins (XylH) and a solute-binding protein (XylF).

The protein localises to the cell inner membrane. The catalysed reaction is D-xylose(out) + ATP + H2O = D-xylose(in) + ADP + phosphate + H(+). In terms of biological role, part of the ABC transporter complex XylFGH involved in xylose import. Responsible for energy coupling to the transport system. This chain is Xylose import ATP-binding protein XylG, found in Pseudomonas savastanoi pv. phaseolicola (strain 1448A / Race 6) (Pseudomonas syringae pv. phaseolicola (strain 1448A / Race 6)).